The following is a 543-amino-acid chain: Tetrahydroberberine oxidase (543 aa).

The N-terminal stretch at 1–26 (MIPNSSSSSILSLLVLLLFSTSSSWA) is a signal peptide. A disulfide bridge links cysteine 37 with cysteine 97. Residues asparagine 54, asparagine 74, asparagine 135, asparagine 142, asparagine 162, asparagine 295, asparagine 335, asparagine 440, and asparagine 482 are each glycosylated (N-linked (GlcNAc...) asparagine). Residues 75-250 (STQKPEFIIT…LSWKVKLVPV (176 aa)) enclose the FAD-binding PCMH-type domain. Residues 112–175 (HDVEGLSYVS…NTLGFPAGFC (64 aa)) constitute a cross-link (6-(S-cysteinyl)-8alpha-(pros-histidyl)-FAD (His-Cys)).

Belongs to the oxygen-dependent FAD-linked oxidoreductase family. It depends on FAD as a cofactor. The FAD cofactor is bound via a bicovalent 6-S-cysteinyl, 8alpha-N1-histidyl FAD linkage.

It catalyses the reaction (S)-canadine + 2 O2 + H(+) = berberine + 2 H2O2. Catalyzes the oxidation of different tetrahydroprotoberberines, such as (S)-canadine, (S)-scoulerine and (S)-tetrahydropalmatine. The sequence is that of Tetrahydroberberine oxidase from Argemone mexicana (Mexican prickly poppy).